The chain runs to 136 residues: Succinate dehydrogenase assembly factor 3, mitochondrial (136 aa).

The N-terminal 24 residues, 1 to 24 (MRASMVRRMAAAASSSASSSLRPA), are a transit peptide targeting the mitochondrion.

This sequence belongs to the complex I LYR family. SDHAF3 subfamily. As to quaternary structure, interacts with the iron-sulfur protein subunit within the SDH catalytic dimer.

Its subcellular location is the mitochondrion matrix. Plays an essential role in the assembly of succinate dehydrogenase (SDH), an enzyme complex (also referred to as respiratory complex II) that is a component of both the tricarboxylic acid (TCA) cycle and the mitochondrial electron transport chain, and which couples the oxidation of succinate to fumarate with the reduction of ubiquinone (coenzyme Q) to ubiquinol. Promotes maturation of the iron-sulfur protein subunit of the SDH catalytic dimer, protecting it from the deleterious effects of oxidants. May act together with SDHAF1. This Pyricularia oryzae (strain 70-15 / ATCC MYA-4617 / FGSC 8958) (Rice blast fungus) protein is Succinate dehydrogenase assembly factor 3, mitochondrial.